A 177-amino-acid chain; its full sequence is Large ribosomal subunit protein uL6 (177 aa).

It belongs to the universal ribosomal protein uL6 family. As to quaternary structure, part of the 50S ribosomal subunit.

This protein binds to the 23S rRNA, and is important in its secondary structure. It is located near the subunit interface in the base of the L7/L12 stalk, and near the tRNA binding site of the peptidyltransferase center. The sequence is that of Large ribosomal subunit protein uL6 from Vibrio cholerae serotype O1 (strain ATCC 39315 / El Tor Inaba N16961).